A 206-amino-acid polypeptide reads, in one-letter code: Dephospho-CoA kinase (206 aa).

Residues 4–204 (IVGLTGGIGS…HQYLQLANAQ (201 aa)) enclose the DPCK domain. 12 to 17 (GSGKST) serves as a coordination point for ATP.

The protein belongs to the CoaE family.

The protein localises to the cytoplasm. The enzyme catalyses 3'-dephospho-CoA + ATP = ADP + CoA + H(+). It participates in cofactor biosynthesis; coenzyme A biosynthesis; CoA from (R)-pantothenate: step 5/5. Functionally, catalyzes the phosphorylation of the 3'-hydroxyl group of dephosphocoenzyme A to form coenzyme A. In Pasteurella multocida (strain Pm70), this protein is Dephospho-CoA kinase.